The primary structure comprises 806 residues: Ribonucleoside-diphosphate reductase large subunit-like protein (806 aa).

Belongs to the ribonucleoside diphosphate reductase large chain family.

It localises to the virion. The protein resides in the host cytoplasm. Does not possess a ribonucleotide reductase activity. Betaherpesviruses probably use another strategy to expand the dNTP pool in a quiescent host cell. This is Ribonucleoside-diphosphate reductase large subunit-like protein from Human herpesvirus 7 (strain JI) (HHV-7).